The sequence spans 982 residues: Presequence protease, mitochondrial (982 aa).

A mitochondrion-targeting transit peptide spans 1 to 7 (MFQIRNY). His84 lines the Zn(2+) pocket. Residue Glu87 is the Proton acceptor of the active site. A Zn(2+)-binding site is contributed by His88. The active site involves Glu160. Glu185 is a binding site for Zn(2+).

Belongs to the peptidase M16 family. PreP subfamily. As to quaternary structure, monomer and homodimer; homodimerization is induced by binding of the substrate. The cofactor is Zn(2+).

The protein resides in the mitochondrion intermembrane space. It is found in the mitochondrion matrix. Its function is as follows. Degrades mitochondrial transit peptides after their cleavage in the intermembrane space or in the matrix, and presequence peptides; clearance of these peptides is required to keep the presequence processing machinery running. Preferentially cleaves the N-terminal side of paired basic amino acid residues. Also degrades other unstructured peptides. May function as an ATP-dependent peptidase as opposed to a metalloendopeptidase. The protein is Presequence protease, mitochondrial (CYM1) of Kluyveromyces lactis (strain ATCC 8585 / CBS 2359 / DSM 70799 / NBRC 1267 / NRRL Y-1140 / WM37) (Yeast).